The chain runs to 617 residues: Guanylate cyclase soluble subunit beta-2 (617 aa).

His-26 contacts heme. A Guanylate cyclase domain is found at 391 to 519; the sequence is TILFSDVVTF…DTVNTASRME (129 aa). Over residues 577–586 the composition is skewed to basic and acidic residues; the sequence is RSKTPVDHKG. The disordered stretch occupies residues 577-605; that stretch reads RSKTPVDHKGSTQKASLPTTKLQGSVQPS. Polar residues predominate over residues 588–604; that stretch reads TQKASLPTTKLQGSVQP.

It belongs to the adenylyl cyclase class-4/guanylyl cyclase family. As to quaternary structure, heterodimer of an alpha and a beta chain. The cofactor is heme. In terms of tissue distribution, expressed in gastric signet ring cell carcinoma, but not in the normal stomach.

It localises to the cytoplasm. The catalysed reaction is GTP = 3',5'-cyclic GMP + diphosphate. Its activity is regulated as follows. Activated by nitric oxide in the presence of magnesium or manganese ions. This Homo sapiens (Human) protein is Guanylate cyclase soluble subunit beta-2 (GUCY1B2).